The chain runs to 58 residues: MTGAGTPSQGKKNTTTHTKCRRCGEKSYHTKKKVCSSCGFGASAKRRDYEWQGKTGDN.

The segment covering 1–17 (MTGAGTPSQGKKNTTTH) has biased composition (polar residues). The disordered stretch occupies residues 1 to 26 (MTGAGTPSQGKKNTTTHTKCRRCGEK). Zn(2+) is bound by residues Cys20, Cys23, Cys35, and Cys38. A C4-type zinc finger spans residues 20-38 (CRRCGEKSYHTKKKVCSSC).

It belongs to the eukaryotic ribosomal protein eL37 family. Requires Zn(2+) as cofactor.

Binds to the 23S rRNA. This Halobacterium salinarum (strain ATCC 29341 / DSM 671 / R1) protein is Large ribosomal subunit protein eL37.